The sequence spans 222 residues: Cytidylate kinase 2 (222 aa).

7–15 contacts ATP; that stretch reads GPSGAGKGT.

This sequence belongs to the cytidylate kinase family. Type 1 subfamily.

Its subcellular location is the cytoplasm. The catalysed reaction is CMP + ATP = CDP + ADP. It carries out the reaction dCMP + ATP = dCDP + ADP. The polypeptide is Cytidylate kinase 2 (Haemophilus influenzae (strain ATCC 51907 / DSM 11121 / KW20 / Rd)).